Here is a 240-residue protein sequence, read N- to C-terminus: 1-(5-phosphoribosyl)-5-[(5-phosphoribosylamino)methylideneamino] imidazole-4-carboxamide isomerase (240 aa).

The Proton acceptor role is filled by Asp8. The Proton donor role is filled by Asp129.

It belongs to the HisA/HisF family.

It is found in the cytoplasm. The enzyme catalyses 1-(5-phospho-beta-D-ribosyl)-5-[(5-phospho-beta-D-ribosylamino)methylideneamino]imidazole-4-carboxamide = 5-[(5-phospho-1-deoxy-D-ribulos-1-ylimino)methylamino]-1-(5-phospho-beta-D-ribosyl)imidazole-4-carboxamide. The protein operates within amino-acid biosynthesis; L-histidine biosynthesis; L-histidine from 5-phospho-alpha-D-ribose 1-diphosphate: step 4/9. This is 1-(5-phosphoribosyl)-5-[(5-phosphoribosylamino)methylideneamino] imidazole-4-carboxamide isomerase from Listeria welshimeri serovar 6b (strain ATCC 35897 / DSM 20650 / CCUG 15529 / CIP 8149 / NCTC 11857 / SLCC 5334 / V8).